The following is an 89-amino-acid chain: Small ribosomal subunit protein uS15 (89 aa).

This sequence belongs to the universal ribosomal protein uS15 family. As to quaternary structure, part of the 30S ribosomal subunit. Forms a bridge to the 50S subunit in the 70S ribosome, contacting the 23S rRNA.

Its function is as follows. One of the primary rRNA binding proteins, it binds directly to 16S rRNA where it helps nucleate assembly of the platform of the 30S subunit by binding and bridging several RNA helices of the 16S rRNA. Functionally, forms an intersubunit bridge (bridge B4) with the 23S rRNA of the 50S subunit in the ribosome. The polypeptide is Small ribosomal subunit protein uS15 (Corynebacterium diphtheriae (strain ATCC 700971 / NCTC 13129 / Biotype gravis)).